The following is a 60-amino-acid chain: Large ribosomal subunit protein bL32 (60 aa).

It belongs to the bacterial ribosomal protein bL32 family.

The protein is Large ribosomal subunit protein bL32 of Clostridium acetobutylicum (strain ATCC 824 / DSM 792 / JCM 1419 / IAM 19013 / LMG 5710 / NBRC 13948 / NRRL B-527 / VKM B-1787 / 2291 / W).